The chain runs to 295 residues: Diaminopimelate epimerase (295 aa).

Residues Asn-11 and Asn-67 each contribute to the substrate site. The active-site Proton donor is the Cys-76. Residues 77 to 78 (GN), Asn-171, Asn-210, and 228 to 229 (ER) contribute to the substrate site. The active-site Proton acceptor is the Cys-237. 238 to 239 (GT) contacts substrate.

It belongs to the diaminopimelate epimerase family. As to quaternary structure, homodimer.

The protein localises to the cytoplasm. It catalyses the reaction (2S,6S)-2,6-diaminopimelate = meso-2,6-diaminopimelate. Its pathway is amino-acid biosynthesis; L-lysine biosynthesis via DAP pathway; DL-2,6-diaminopimelate from LL-2,6-diaminopimelate: step 1/1. Catalyzes the stereoinversion of LL-2,6-diaminopimelate (L,L-DAP) to meso-diaminopimelate (meso-DAP), a precursor of L-lysine. The chain is Diaminopimelate epimerase from Methanocaldococcus jannaschii (strain ATCC 43067 / DSM 2661 / JAL-1 / JCM 10045 / NBRC 100440) (Methanococcus jannaschii).